A 242-amino-acid polypeptide reads, in one-letter code: Succinyl-CoA:3-ketoacid coenzyme A transferase subunit A (242 aa).

33-39 (GGFGLCG) is a CoA binding site.

Belongs to the 3-oxoacid CoA-transferase subunit A family. Heterodimer of a subunit A and a subunit B.

The enzyme catalyses a 3-oxo acid + succinyl-CoA = a 3-oxoacyl-CoA + succinate. It participates in bacterial outer membrane biogenesis; lipopolysaccharide biosynthesis. The chain is Succinyl-CoA:3-ketoacid coenzyme A transferase subunit A (lpsI) from Xanthomonas campestris pv. campestris (strain ATCC 33913 / DSM 3586 / NCPPB 528 / LMG 568 / P 25).